A 211-amino-acid chain; its full sequence is Uracil phosphoribosyltransferase (211 aa).

5-phospho-alpha-D-ribose 1-diphosphate contacts are provided by residues R78, R103, and 130–138 (DPMLATGAT). Residues I195 and 200 to 202 (GDA) contribute to the uracil site. Position 201 (D201) interacts with 5-phospho-alpha-D-ribose 1-diphosphate.

This sequence belongs to the UPRTase family. The cofactor is Mg(2+).

It carries out the reaction UMP + diphosphate = 5-phospho-alpha-D-ribose 1-diphosphate + uracil. It functions in the pathway pyrimidine metabolism; UMP biosynthesis via salvage pathway; UMP from uracil: step 1/1. Allosterically activated by GTP. In terms of biological role, catalyzes the conversion of uracil and 5-phospho-alpha-D-ribose 1-diphosphate (PRPP) to UMP and diphosphate. The chain is Uracil phosphoribosyltransferase from Renibacterium salmoninarum (strain ATCC 33209 / DSM 20767 / JCM 11484 / NBRC 15589 / NCIMB 2235).